The sequence spans 1183 residues: Atrophin-1 (1183 aa).

Disordered stretches follow at residues 1 to 603 (MKTR…ITTS), 617 to 760 (SPAG…ARFN), and 780 to 855 (LEGS…HRPP). A Nuclear localization signal motif is present at residues 16–32 (RKKEAPGPREELRSRGR). Residues 17–29 (KKEAPGPREELRS) show a composition bias toward basic and acidic residues. Ser-34 is modified (phosphoserine). Residues 45–63 (GKAEKSRQTAKKARVEETS) are compositionally biased toward basic and acidic residues. 5 positions are modified to phosphoserine: Ser-77, Ser-79, Ser-100, Ser-102, and Ser-106. Residues 107–127 (LDGRSINDDGSSDPRDIDQDN) are compositionally biased toward basic and acidic residues. Positions 128–151 (RSTSPSIYSPGSVENDSDSSSGLS) are enriched in polar residues. Pro residues-rich tracts occupy residues 157 to 173 (PYHP…PPDS) and 207 to 218 (GPPPGAPPPHPQ). Residues 261–272 (IPISSSGASGAP) show a composition bias toward low complexity. Over residues 344–373 (PPGPEKGPTLAPSPHPLPPASSSAPGPPMR) the composition is skewed to pro residues. The span at 377 to 400 (SSCSSSSVAASSSSSAATSQYPAS) shows a compositional bias: low complexity. Residues 415–436 (SMSVSNQPPKYTQPSLPSQAVW) show a composition bias toward polar residues. Residues 510-560 (HPLESSNSHHAHPYNMSPSLGSLRPYPPGPAHLPPSHGQVSYSQAGPNGPP) are involved in binding BAIAP2. Positions 562–584 (SSSSNSSGSSSQAAYSCSHPSSS) are enriched in low complexity. Ser-625 is subject to Phosphoserine. Lys-634 carries the N6-acetyllysine modification. Thr-646 is modified (phosphothreonine). Ser-654 carries the phosphoserine modification. The residue at position 662 (Thr-662) is a Phosphothreonine. Pro residues-rich tracts occupy residues 701–711 (LPPPPAAPTTG) and 732–745 (SPVP…PPPK). Ser-732 is subject to Phosphoserine; by MAPK8. A phosphoserine mark is found at Ser-739 and Ser-741. A compositionally biased stretch (basic and acidic residues) spans 788–832 (KRADLVEKVRREAEQRAREEKEREREREREKEREREKERELERSV). The tract at residues 872–887 (DTPALRTLSEYARPHV) is required for interaction with FAT1. Residue Ser-889 is modified to Phosphoserine. The disordered stretch occupies residues 921 to 940 (PAAREREREARERDLRDRLK). Over residues 922–940 (AAREREREARERDLRDRLK) the composition is skewed to basic and acidic residues. A Nuclear export signal motif is present at residues 1026-1034 (ALGNDPLAR). At Arg-1108 the chain carries Asymmetric dimethylarginine. A Glycyl lysine isopeptide (Lys-Gly) (interchain with G-Cter in SUMO2) cross-link involves residue Lys-1176.

In terms of assembly, interacts with NR2E1; the interaction represses the transcriptional activity of NR2E1. Interact (via its N-terminus) with FAT1 (via a C-terminal domain). Interacts with BAIAP2, WWP1, WWP2, WWP3 and RERE. Interacts (via its N-terminus) with MTG8; the interaction enhances transcriptional repression of MTG8. Interacts with PQBP1. In terms of processing, phosphorylated in vitro by MAPK8/JNK1 on Ser-732. In terms of tissue distribution, predominant neuronal expression, Expressed in most brain regions including striatum, hippocampus, cerebral cortex, diencephalon, brain stem and cerebellum. Highest levels in cerebellum. Also highly expressed in kidney and testis, low expression in skeletal muscle and heart.

The protein resides in the nucleus. Its subcellular location is the cytoplasm. The protein localises to the perinuclear region. It localises to the cell junction. Its function is as follows. Transcriptional corepressor. Recruits NR2E1 to repress transcription. Promotes vascular smooth cell (VSMC) migration and orientation. Corepressor of MTG8 transcriptional repression. Has some intrinsic repression activity. The protein is Atrophin-1 (Atn1) of Rattus norvegicus (Rat).